The chain runs to 308 residues: Taste receptor type 2 member 10 (308 aa).

Over 1–6 (MLSVVE) the chain is Extracellular. A helical transmembrane segment spans residues 7–27 (GIFIFVVISESVFGVLGNGFI). The Cytoplasmic portion of the chain corresponds to 28-42 (GLVNCIDCAKNKLST). The chain crosses the membrane as a helical span at residues 43–63 (IGFILTGLAISRIFLIWVIIT). At 64–100 (DGFIQIFSPDIYASGNLIEYISYIWVIGNQSSMWFAT) the chain is on the extracellular side. Asn-92 carries N-linked (GlcNAc...) asparagine glycosylation. Residues 101 to 121 (SLSIFYFLKIANFSNYIFLWL) form a helical membrane-spanning segment. The Cytoplasmic portion of the chain corresponds to 122–126 (KSRTN). Residues 127–147 (MVLPFMMAFLLISSLLNFAHI) traverse the membrane as a helical segment. Over 148 to 179 (VKILNDHKMKNDTVWHLNMYKSEYFIKQILLN) the chain is Extracellular. Asn-158 is a glycosylation site (N-linked (GlcNAc...) asparagine). The helical transmembrane segment at 180–200 (LGVIFFFTLSLITCVLLIISL) threads the bilayer. The Cytoplasmic segment spans residues 201 to 227 (WRHNRQMQSNVTGLRDSNTEAHVKAMK). Residues 228-248 (VLISFIILFILYFIGMALEIS) form a helical membrane-spanning segment. Over 249–257 (RFTVPENKL) the chain is Extracellular. The chain crosses the membrane as a helical span at residues 258 to 278 (LLMFGMTTTAIYPWGHSFILI). Over 279–308 (LGNSKLKQASLRVLQQLKCCEKRKKSQSHI) the chain is Cytoplasmic.

This sequence belongs to the G-protein coupled receptor T2R family.

The protein resides in the membrane. In terms of biological role, receptor that may play a role in the perception of bitterness and is gustducin-linked. May play a role in sensing the chemical composition of the gastrointestinal content. The activity of this receptor may stimulate alpha gustducin, mediate PLC-beta-2 activation and lead to the gating of TRPM5. This chain is Taste receptor type 2 member 10 (TAS2R10), found in Pongo pygmaeus (Bornean orangutan).